A 199-amino-acid chain; its full sequence is Recombination protein RecR (199 aa).

A C4-type zinc finger spans residues Cys57–Cys72. One can recognise a Toprim domain in the interval Ser80–Ser176.

The protein belongs to the RecR family.

Its function is as follows. May play a role in DNA repair. It seems to be involved in an RecBC-independent recombinational process of DNA repair. It may act with RecF and RecO. The sequence is that of Recombination protein RecR from Limosilactobacillus fermentum (strain NBRC 3956 / LMG 18251) (Lactobacillus fermentum).